The primary structure comprises 78 residues: Small ribosomal subunit protein bS18 (78 aa).

The protein belongs to the bacterial ribosomal protein bS18 family. In terms of assembly, part of the 30S ribosomal subunit. Forms a tight heterodimer with protein bS6.

Functionally, binds as a heterodimer with protein bS6 to the central domain of the 16S rRNA, where it helps stabilize the platform of the 30S subunit. This chain is Small ribosomal subunit protein bS18, found in Clostridium novyi (strain NT).